The following is a 420-amino-acid chain: D-tagatose-1,6-bisphosphate aldolase subunit GatZ (420 aa).

This sequence belongs to the GatZ/KbaZ family. GatZ subfamily. As to quaternary structure, forms a complex with GatY.

Its pathway is carbohydrate metabolism; D-tagatose 6-phosphate degradation; D-glyceraldehyde 3-phosphate and glycerone phosphate from D-tagatose 6-phosphate: step 2/2. Functionally, component of the tagatose-1,6-bisphosphate aldolase GatYZ that is required for full activity and stability of the Y subunit. Could have a chaperone-like function for the proper and stable folding of GatY. When expressed alone, GatZ does not show any aldolase activity. Is involved in the catabolism of galactitol. The sequence is that of D-tagatose-1,6-bisphosphate aldolase subunit GatZ from Escherichia coli O139:H28 (strain E24377A / ETEC).